Consider the following 856-residue polypeptide: Phosphatidylglycerol lysyltransferase (856 aa).

13 helical membrane passes run 7 to 27 (ALSI…IYQS), 51 to 71 (LFML…YDYV), 88 to 108 (VSWI…AGVG), 128 to 148 (IAWL…FVAA), 161 to 181 (PWLW…LAVS), 208 to 228 (SVVE…AMGI), 235 to 255 (VFGV…PGGF), 280 to 300 (IVLY…FFAA), 342 to 362 (SLSL…SLPI), 375 to 395 (ALLL…ILPI), 420 to 440 (FLKG…VLLV), 459 to 479 (IFAV…AGFI), and 501 to 521 (HATI…TVVY).

The protein belongs to the LPG synthase family.

The protein localises to the cell membrane. The enzyme catalyses L-lysyl-tRNA(Lys) + a 1,2-diacyl-sn-glycero-3-phospho-(1'-sn-glycerol) = a 1,2-diacyl-sn-glycero-3-phospho-1'-(3'-O-L-lysyl)-sn-glycerol + tRNA(Lys). Functionally, catalyzes the transfer of a lysyl group from L-lysyl-tRNA(Lys) to membrane-bound phosphatidylglycerol (PG), which produces lysylphosphatidylglycerol (LPG), one of the components of the bacterial membrane with a positive net charge. LPG synthesis contributes to the resistance to cationic antimicrobial peptides (CAMPs) and likely protects B.subtilis against its own CAMPs and against those produced by competiting microorganisms (bacteriocins). In fact, the modification of anionic phosphatidylglycerol with positively charged L-lysine results in repulsion of the peptides. The protein is Phosphatidylglycerol lysyltransferase (mprF) of Bacillus subtilis (strain 168).